Here is a 419-residue protein sequence, read N- to C-terminus: Innexin inx5 (419 aa).

The Cytoplasmic segment spans residues 1–21 (MFSAVKPLSKYLQFKSIRIYD). A helical transmembrane segment spans residues 22–42 (SVFTIHSRCTVVILLTCSLLL). The Extracellular portion of the chain corresponds to 43-162 (SARQYFGDPI…QTERQYLRYY (120 aa)). Residues 163-183 (QWVIILLLFQSFVFYFPSCLW) form a helical membrane-spanning segment. Topologically, residues 184–238 (KVWEGRRLKQLCSEVGDALLSEETYNTRLRMLVKYFTTDYEDMHFCYMAKYVFCE) are cytoplasmic. Residues 239–259 (VLNFLISVVNIIVLEVFLNGF) form a helical membrane-spanning segment. Residues 260-320 (WSKYLRALAT…ILPLNILNEK (61 aa)) are Extracellular-facing. Residues 321–341 (IFVFLWAWFLLMALMSGLNLL) traverse the membrane as a helical segment. Topologically, residues 342 to 419 (CRLAMICSRY…ASGSTLESPV (78 aa)) are cytoplasmic.

Belongs to the pannexin family. As to expression, expressed in the cortex of the pupal CNS and at low levels in the wing imaginal disk.

It localises to the cell membrane. Its subcellular location is the cell junction. It is found in the gap junction. Structural component of the gap junctions. The polypeptide is Innexin inx5 (Inx5) (Drosophila melanogaster (Fruit fly)).